Here is a 113-residue protein sequence, read N- to C-terminus: RING-box protein 2 (113 aa).

The interval 1–26 is disordered; that stretch reads MADVEDGEEPCVLSSHSGSAGSKSGG. N-acetylalanine is present on alanine 2. Residues cysteine 50, cysteine 53, cysteine 61, cysteine 64, cysteine 73, cysteine 80, histidine 82, histidine 85, cysteine 87, cysteine 88, cysteine 99, and cysteine 102 each coordinate Zn(2+). The segment at 61 to 103 adopts an RING-type zinc-finger fold; sequence CLRCQAENKQEDCVVVWGECNHSFHNCCMSLWVKQNNRCPLCQ.

This sequence belongs to the RING-box family. As to quaternary structure, catalytic component of multiple cullin-5-RING E3 ubiquitin-protein ligase complexes (ECS complexes, also named CRL5 complexes) composed of CUL5, Elongin BC (ELOB and ELOC), RNF7/RBX2 and a variable SOCS box domain-containing protein as substrate-specific recognition component. Also interacts (with lower preference) with CUL1, CUL2, CUL3, CUL4A and CUL4B; additional evidence is however required to confirm this result in vivo. Interacts with UBE2F. Interacts with CSNK2B, the interaction is not affected by phosphorylation by CK2. May also interact with DCUN1D1, DCUN1D2, DCUN1D3, DCUN1D4 and DCUN1D5.

It localises to the cytoplasm. The protein localises to the nucleus. The enzyme catalyses S-ubiquitinyl-[E2 ubiquitin-conjugating enzyme]-L-cysteine + [acceptor protein]-L-lysine = [E2 ubiquitin-conjugating enzyme]-L-cysteine + N(6)-ubiquitinyl-[acceptor protein]-L-lysine.. It carries out the reaction S-[NEDD8-protein]-yl-[E2 NEDD8-conjugating enzyme]-L-cysteine + [cullin]-L-lysine = [E2 NEDD8-conjugating enzyme]-L-cysteine + N(6)-[NEDD8-protein]-yl-[cullin]-L-lysine.. It participates in protein modification; protein ubiquitination. Its pathway is protein modification; protein neddylation. Functionally, catalytic component of multiple cullin-5-RING E3 ubiquitin-protein ligase complexes (ECS complexes), which mediate the ubiquitination and subsequent proteasomal degradation of target proteins. It is thereby involved in various biological processes, such as cell cycle progression, signal transduction and transcription. The functional specificity of the E3 ubiquitin-protein ligase ECS complexes depend on the variable SOCS box-containing substrate recognition component. Within ECS complexes, RNF7/RBX2 recruits the E2 ubiquitination enzyme to the complex via its RING-type and brings it into close proximity to the substrate. Catalytic subunit of various SOCS-containing ECS complexes, such as the ECS(SOCS7) complex, that regulate reelin signaling by mediating ubiquitination and degradation of DAB1. The ECS(SOCS2) complex mediates the ubiquitination and subsequent proteasomal degradation of phosphorylated EPOR and GHR. Promotes ubiquitination and degradation of NF1, thereby regulating Ras protein signal transduction. As part of the ECS(ASB9) complex, catalyzes ubiquitination and degradation of CKB. The ECS(SPSB3) complex catalyzes ubiquitination of nuclear CGAS. As part of the ECS(RAB40C) complex, mediates ANKRD28 ubiquitination and degradation, thereby inhibiting protein phosphatase 6 (PP6) complex activity and focal adhesion assembly during cell migration. As part of some ECS complex, catalyzes 'Lys-11'-linked ubiquitination and degradation of BTRC. ECS complexes and ARIH2 collaborate in tandem to mediate ubiquitination of target proteins; ARIH2 mediating addition of the first ubiquitin on CRLs targets. Specifically catalyzes the neddylation of CUL5 via its interaction with UBE2F. Does not catalyze neddylation of other cullins (CUL1, CUL2, CUL3, CUL4A or CUL4B). May play a role in protecting cells from apoptosis induced by redox agents. The protein is RING-box protein 2 of Mus musculus (Mouse).